Reading from the N-terminus, the 305-residue chain is MNLRRLKYFVKIVDIGSLTQAAEVLHIAQPALSQQVATLEGEMDQQLLIRTKRGVTPTEAGKILYTHARTILRQCEQAQLAVNNVGQTLRGQVSIGLAPGTAASAITMPLLQTVRNELPEVMVYLQESSGTALNDKLLAGQLDMAVLYERSPVAGIVSQPLLKEDLYLVGTRDCPGQSVDLTAVAEMNLFLPRDYSAVRARVTEAFTLRRLSAKIIGEIESITTLTAAIASGMGATVLPESAARSLCGAANGWMARISTPSMSLSLSLNMSARGSLSPQAQAVKEILLSLVSRPSLENRELQLVS.

An HTH lysR-type domain is found at M1–T58. The H-T-H motif DNA-binding region spans L18–A37.

Belongs to the LysR transcriptional regulatory family.

Transcriptional activator for the hut, put and ure operons and repressor for the gdh and gltB operons in response to nitrogen limitation. Negative regulator of its own expression. This is Nitrogen assimilation regulatory protein nac (nac) from Klebsiella aerogenes (Enterobacter aerogenes).